A 65-amino-acid chain; its full sequence is Weak neurotoxin 7 (65 aa).

Intrachain disulfides connect C3–C24, C6–C11, C17–C42, C46–C57, and C58–C63.

This sequence belongs to the three-finger toxin family. Ancestral subfamily. Orphan group II sub-subfamily. In terms of tissue distribution, expressed by the venom gland.

Its subcellular location is the secreted. In terms of biological role, binds with low affinity to muscular (alpha-1-beta-1-delta-epsilon/CHRNA1-CHRNB1-CHRND-CHRNE) and very low affinity to neuronal (alpha-7/CHRNA7) nicotinic acetylcholine receptor (nAChR). The sequence is that of Weak neurotoxin 7 from Naja naja (Indian cobra).